The primary structure comprises 182 residues: Isopentenyl-diphosphate Delta-isomerase (182 aa).

Positions 25 and 32 each coordinate Mn(2+). The region spanning 30 to 164 (LLHLAFSSWL…PWAFSPWMVM (135 aa)) is the Nudix hydrolase domain. The active site involves C67. A Mn(2+)-binding site is contributed by H69. A Mg(2+)-binding site is contributed by E87. 2 residues coordinate Mn(2+): E114 and E116. The active site involves E116.

It belongs to the IPP isomerase type 1 family. As to quaternary structure, homodimer. Mg(2+) serves as cofactor. Mn(2+) is required as a cofactor.

It is found in the cytoplasm. It carries out the reaction isopentenyl diphosphate = dimethylallyl diphosphate. It functions in the pathway isoprenoid biosynthesis; dimethylallyl diphosphate biosynthesis; dimethylallyl diphosphate from isopentenyl diphosphate: step 1/1. Catalyzes the 1,3-allylic rearrangement of the homoallylic substrate isopentenyl (IPP) to its highly electrophilic allylic isomer, dimethylallyl diphosphate (DMAPP). This Escherichia coli O127:H6 (strain E2348/69 / EPEC) protein is Isopentenyl-diphosphate Delta-isomerase.